A 175-amino-acid polypeptide reads, in one-letter code: ATP synthase subunit b (175 aa).

The chain crosses the membrane as a helical span at residues 20-40 (LIFWTAITFVIVLLILKKIAW).

The protein belongs to the ATPase B chain family. As to quaternary structure, F-type ATPases have 2 components, F(1) - the catalytic core - and F(0) - the membrane proton channel. F(1) has five subunits: alpha(3), beta(3), gamma(1), delta(1), epsilon(1). F(0) has four main subunits: a(1), b(2) and c(10-14). The alpha and beta chains form an alternating ring which encloses part of the gamma chain. F(1) is attached to F(0) by a central stalk formed by the gamma and epsilon chains, while a peripheral stalk is formed by the delta and b chains.

Its subcellular location is the cell inner membrane. Its function is as follows. F(1)F(0) ATP synthase produces ATP from ADP in the presence of a proton or sodium gradient. F-type ATPases consist of two structural domains, F(1) containing the extramembraneous catalytic core and F(0) containing the membrane proton channel, linked together by a central stalk and a peripheral stalk. During catalysis, ATP synthesis in the catalytic domain of F(1) is coupled via a rotary mechanism of the central stalk subunits to proton translocation. Functionally, component of the F(0) channel, it forms part of the peripheral stalk, linking F(1) to F(0). This is ATP synthase subunit b from Pelodictyon phaeoclathratiforme (strain DSM 5477 / BU-1).